A 39-amino-acid polypeptide reads, in one-letter code: SPVCTPSGQPCQPNTQPCCNNAEEEQTINCNGNTVYRCA.

3 disulfides stabilise this stretch: cysteine 4–cysteine 19, cysteine 11–cysteine 30, and cysteine 18–cysteine 38.

Post-translationally, contains 3 disulfide bonds. As to expression, expressed by the venom gland.

The protein resides in the secreted. Potent inhibitor of insect, but not mammalian, voltage-gated calcium channels (Cav). In Missulena bradleyi (Eastern mouse spider), this protein is Omega-actinopoditoxin-Mb1a.